We begin with the raw amino-acid sequence, 132 residues long: Small ribosomal subunit protein uS8 (132 aa).

It belongs to the universal ribosomal protein uS8 family. As to quaternary structure, part of the 30S ribosomal subunit. Contacts proteins S5 and S12.

Functionally, one of the primary rRNA binding proteins, it binds directly to 16S rRNA central domain where it helps coordinate assembly of the platform of the 30S subunit. The polypeptide is Small ribosomal subunit protein uS8 (Acidobacterium capsulatum (strain ATCC 51196 / DSM 11244 / BCRC 80197 / JCM 7670 / NBRC 15755 / NCIMB 13165 / 161)).